Here is a 60-residue protein sequence, read N- to C-terminus: MKNPILILFTAFIALLGFFGMSAEALADPKADPLAGPNPDADPEAINLKAIAPLAKKLLG.

Positions M1 to A27 are cleaved as a signal peptide. 4 AXPX repeats span residues A27 to K30, A31 to L34, A35 to N38, and A41 to E44. Residues D28–A45 constitute a propeptide that is removed on maturation. Position 59 is a leucine amide (L59).

The protein belongs to the MCD family. Mastoparan subfamily. As to expression, expressed by the venom gland.

It is found in the secreted. In terms of biological role, the synthetic peptide shows antimicrobial activities against Gram-negative bacteria (but not against all strains tested), Gram-positive bacteria (not all strains tested) and the fungi C.albicans and C.parapsilosis. Exhibits little hemolytic activity against washed human erythrocytes. This is Mastoparan-VT4 from Vespa tropica (Greater banded hornet).